The primary structure comprises 340 residues: Biotin synthase (340 aa).

A Radical SAM core domain is found at 56–283; the sequence is NAVQLSTLLS…KAVVRLSAGR (228 aa). Residues Cys71, Cys75, and Cys78 each contribute to the [4Fe-4S] cluster site. Residues Cys115, Cys146, Cys206, and Arg278 each contribute to the [2Fe-2S] cluster site.

It belongs to the radical SAM superfamily. Biotin synthase family. Homodimer. [4Fe-4S] cluster serves as cofactor. It depends on [2Fe-2S] cluster as a cofactor.

The enzyme catalyses (4R,5S)-dethiobiotin + (sulfur carrier)-SH + 2 reduced [2Fe-2S]-[ferredoxin] + 2 S-adenosyl-L-methionine = (sulfur carrier)-H + biotin + 2 5'-deoxyadenosine + 2 L-methionine + 2 oxidized [2Fe-2S]-[ferredoxin]. The protein operates within cofactor biosynthesis; biotin biosynthesis; biotin from 7,8-diaminononanoate: step 2/2. Catalyzes the conversion of dethiobiotin (DTB) to biotin by the insertion of a sulfur atom into dethiobiotin via a radical-based mechanism. In Burkholderia lata (strain ATCC 17760 / DSM 23089 / LMG 22485 / NCIMB 9086 / R18194 / 383), this protein is Biotin synthase.